Consider the following 156-residue polypeptide: uncharacterized protein (156 aa).

Residues 43–84 (LKIDENEVKLEISVEKLKNLSRVCENIEQVVDKVVEELRYAL) adopt a coiled-coil conformation.

This is an uncharacterized protein from Aquifex aeolicus (strain VF5).